Here is a 513-residue protein sequence, read N- to C-terminus: ATP synthase subunit alpha (513 aa).

169–176 (GDRQVGKT) serves as a coordination point for ATP.

This sequence belongs to the ATPase alpha/beta chains family. As to quaternary structure, F-type ATPases have 2 components, CF(1) - the catalytic core - and CF(0) - the membrane proton channel. CF(1) has five subunits: alpha(3), beta(3), gamma(1), delta(1), epsilon(1). CF(0) has three main subunits: a(1), b(2) and c(9-12). The alpha and beta chains form an alternating ring which encloses part of the gamma chain. CF(1) is attached to CF(0) by a central stalk formed by the gamma and epsilon chains, while a peripheral stalk is formed by the delta and b chains.

Its subcellular location is the cell inner membrane. The catalysed reaction is ATP + H2O + 4 H(+)(in) = ADP + phosphate + 5 H(+)(out). Functionally, produces ATP from ADP in the presence of a proton gradient across the membrane. The alpha chain is a regulatory subunit. This chain is ATP synthase subunit alpha, found in Aeromonas salmonicida (strain A449).